Reading from the N-terminus, the 386-residue chain is MATKNKKEIVNTETKNLANLIIKEISKESFDFGILQKMQQAFSTASKQKQREAFINILDTKLDKEQLHKLNQTIMKNANELMPDNDPNFVCRTSNNKVFQEILLLEAKRSGMQARFSDTGALQSLDIKDITPEILDHYRVLQEKFYLKRNSKDSVDSRIAQSINFLLYAPLFRESDIYKKLGLKSAEIEREIQDPNGKYVQQLIDAKIGSNIPFHMQKNNVNEGKEIERTAIIEKAITKFEQDKKFSFEGKKRDEITKYLSKSLEGASDYILTFKKNELVDVIYQGLDKGQTLWSKVANYIGIKSYSISKENLKSVAKIINDKIKSSHTPLKIEVQDKLKQISKELNRLNNPVLPSEAQKVQVKSNKKPPIAPKPEHLKKRDHGLC.

The disordered stretch occupies residues 355–386; it reads PSEAQKVQVKSNKKPPIAPKPEHLKKRDHGLC. A compositionally biased stretch (basic residues) spans 377–386; that stretch reads HLKKRDHGLC.

This is an uncharacterized protein from Rickettsia prowazekii (strain Madrid E).